Here is a 440-residue protein sequence, read N- to C-terminus: Tryptophan aminotransferase-related protein 2 (440 aa).

The chain crosses the membrane as a helical span at residues 7–26; that stretch reads FLSWRNMLVLSLAINFSLIL. Residues Tyr-112, 154–155, Asn-222, 242–245, 265–268, and Arg-276 each bind pyridoxal 5'-phosphate; these read ST, DLAY, and TASK. Lys-268 is modified (N6-(pyridoxal phosphate)lysine).

It belongs to the alliinase family. Pyridoxal 5'-phosphate is required as a cofactor. Expressed in roots, cotyledons and in the apical parts of hypocotyls. In roots, restricted to the provasculature of meristematic regions. Detected on the inner side of the apical hooks.

Its subcellular location is the membrane. The catalysed reaction is L-tryptophan + 2-oxoglutarate = indole-3-pyruvate + L-glutamate. It catalyses the reaction L-tryptophan + pyruvate = indole-3-pyruvate + L-alanine. Its pathway is plant hormone metabolism; auxin biosynthesis. Its activity is regulated as follows. Inhibited by L-kynurenine. Its function is as follows. Involved in auxin production. Both TAA1 and TAR2 are required for maintaining proper auxin levels in roots, while TAA1, TAR1 and TAR2 are required for proper embryo patterning. Involved in the maintenance of the root stem cell niches. The chain is Tryptophan aminotransferase-related protein 2 (TAR2) from Arabidopsis thaliana (Mouse-ear cress).